Reading from the N-terminus, the 212-residue chain is MAKGILGRKIGMTQIFDENGVLIPVTVIDVEGNVVLQQKTVEVDGYQATQVGFESKREKLSNKPELGHVKKANTAPKRFVKEIRFDALNNELLALEVGTEIKADLFTAGEDVDVTGTSKGKGFQGNIKRHNQSRGPMTHGSRYHRGVGSLGAIKGNMKGKNLPGQMGNEQVTVQNLKIVAVDTENDLLLVSGSVPGPRKGYVVVRSAIKKGN.

The disordered stretch occupies residues 117–142 (TSKGKGFQGNIKRHNQSRGPMTHGSR).

The protein belongs to the universal ribosomal protein uL3 family. Part of the 50S ribosomal subunit. Forms a cluster with proteins L14 and L19.

In terms of biological role, one of the primary rRNA binding proteins, it binds directly near the 3'-end of the 23S rRNA, where it nucleates assembly of the 50S subunit. This chain is Large ribosomal subunit protein uL3, found in Acholeplasma laidlawii (strain PG-8A).